A 337-amino-acid polypeptide reads, in one-letter code: Hsp90 co-chaperone Cdc37-like 1 (337 aa).

The segment covering methionine 1–tryptophan 11 has biased composition (pro residues). A disordered region spans residues methionine 1–glycine 40. Residues glutamate 2–methionine 171 are self-association. Residues serine 32 and serine 88 each carry the phosphoserine modification. Residues histidine 84 to lysine 122 are a coiled coil. The interval lysine 147 to glutamine 277 is self-association and interaction with Hsp90. Positions lysine 267–valine 337 are interaction with Hsp70. Residues serine 278–valine 337 form a required for interaction with STIP1 region.

It belongs to the CDC37 family. Self-associates. Forms complexes with Hsp70 and Hsp90. Interacts with CDC37, FKBP4, PPID and STIP1. In terms of tissue distribution, expressed in brain, heart, kidney, liver, placenta and skeletal muscle.

It localises to the cytoplasm. Co-chaperone that binds to numerous proteins and promotes their interaction with Hsp70 and Hsp90. The polypeptide is Hsp90 co-chaperone Cdc37-like 1 (CDC37L1) (Homo sapiens (Human)).